A 228-amino-acid polypeptide reads, in one-letter code: L-ribulose-5-phosphate 4-epimerase UlaF (228 aa).

Substrate-binding positions include 26-27, 43-44, and 72-73; these read GN, SG, and SS. Residues D74, H93, and H95 each contribute to the Zn(2+) site. D118 functions as the Proton donor/acceptor in the catalytic mechanism. Residue H167 participates in Zn(2+) binding. The active-site Proton donor/acceptor is the Y225.

This sequence belongs to the aldolase class II family. AraD/FucA subfamily. It depends on Zn(2+) as a cofactor.

The enzyme catalyses L-ribulose 5-phosphate = D-xylulose 5-phosphate. The protein operates within cofactor degradation; L-ascorbate degradation; D-xylulose 5-phosphate from L-ascorbate: step 4/4. In terms of biological role, catalyzes the isomerization of L-ribulose 5-phosphate to D-xylulose 5-phosphate. Is involved in the anaerobic L-ascorbate utilization. The sequence is that of L-ribulose-5-phosphate 4-epimerase UlaF from Escherichia fergusonii (strain ATCC 35469 / DSM 13698 / CCUG 18766 / IAM 14443 / JCM 21226 / LMG 7866 / NBRC 102419 / NCTC 12128 / CDC 0568-73).